The primary structure comprises 331 residues: UDP-galactose/UDP-glucose transporter 3 (331 aa).

8 consecutive transmembrane segments (helical) span residues 11 to 31, 49 to 69, 80 to 100, 112 to 132, 135 to 155, 170 to 190, 206 to 226, and 245 to 265; these read VLLLSFCVAGIWAAYIYQGIL, HLAFLNLAQNVICLVWSYIMI, APWWTYWSAGITNTIGPAMGI, VLAKSSKMIPVMLMGSLVYGI, TLPEYLCTFLVAGGVSMFALL, APLGYGLCFLNLAFDGFTNAT, IMLGMNLWGTIYNMVYMFGLP, and WDILMYCLCGAVGQNFIFLTI. The Di-lysine motif signature appears at 327–331; it reads KKKKA.

It belongs to the nucleotide-sugar transporter family. UDP-galactose:UMP antiporter (TC 2.A.7.11) subfamily. In terms of tissue distribution, mostly expressed in flowers, and, to a lower extent, in roots, stems and leaves.

It localises to the endoplasmic reticulum membrane. It is found in the golgi apparatus membrane. Its function is as follows. Essential sugar transporter required for the transport of UDP-glucose from the cytoplasm into the Golgi and the endoplasmic reticulum. Essential for pollen development and involved in embryo sac progress. This is UDP-galactose/UDP-glucose transporter 3 from Arabidopsis thaliana (Mouse-ear cress).